An 81-amino-acid chain; its full sequence is Cytotoxin 5b (81 aa).

The signal sequence occupies residues 1–21; that stretch reads MKTLLLTLLVVTIVCLDLGYT. Cystine bridges form between Cys-24–Cys-42, Cys-35–Cys-59, Cys-63–Cys-74, and Cys-75–Cys-80.

This sequence belongs to the three-finger toxin family. Short-chain subfamily. Type IA cytotoxin sub-subfamily. As to quaternary structure, monomer in solution; Homodimer and oligomer in the presence of negatively charged lipids forming a pore with a size ranging between 20 and 30 Angstroms. As to expression, expressed by the venom gland.

It is found in the secreted. It localises to the target cell membrane. In terms of biological role, shows cytolytic activity on many different cells by forming pore in lipid membranes. In vivo, increases heart rate or kills the animal by cardiac arrest. In addition, it binds to heparin with high affinity, interacts with Kv channel-interacting protein 1 (KCNIP1) in a calcium-independent manner, and binds to integrin alpha-V/beta-3 (ITGAV/ITGB3) with moderate affinity. The sequence is that of Cytotoxin 5b from Naja sputatrix (Malayan spitting cobra).